A 522-amino-acid polypeptide reads, in one-letter code: Cytochrome P450 monooxygenase FGSG_08207 (522 aa).

A helical transmembrane segment spans residues 10–30 (LLLSKPVVLGLAACALLFLIG). 2 N-linked (GlcNAc...) asparagine glycosylation sites follow: Asn104 and Asn155. Position 441 (Cys441) interacts with heme.

The protein belongs to the cytochrome P450 family. The cofactor is heme.

It is found in the membrane. The protein operates within secondary metabolite biosynthesis. Its function is as follows. Cytochrome P450 monooxygenase; part of the gene cluster that mediates the biosynthesis of the lipopeptide fusaristatin A. Fusaristatin A consists of a polyketide chain linked to three amino acid residues glutamine (Gln), dehydroalanine (dehydro-Ala), and beta-aminoisobutyric acid. The biosynthesis starts with formation of a linear polyketide chain by the highly reducing polyketide synthase PKS6. The gene cluster does not contain an acyl-CoA ligase or an acyl-transferase, and it is therefore predicted that the polyketide is transferred directly to the nonribosomal peptide synthetase NRPS7. Modules 1-3 from NRPS7 incorporate dehydro-Ala, Gln, and beta-aminoisobutyric acid in the compound, which is released by cyclization. The beta-aminoisobutyric acid units are most likely not freely available to the NRPS, but can be synthesized from thymine, which requires a dehydrogenase, a monooxygenase, and an aminotransferase. The fusaristatin A cluster contains a cytochrome P450 monooxygenase (FGSG_08207) and an aminotransferase (FGSG_17085), which theoretically can perform two of the enzymatic steps. The enzymes may however also be involved in biosynthesis of dehydroalanine or modification of the polyketide. The dehydro-Ala residue can be a result of cyclization, where serine is dehydrated. The last gene of the cluster encodes a protein with an A/B barrel domain found in variable enzymes, which hampers functional prediction. The polypeptide is Cytochrome P450 monooxygenase FGSG_08207 (Gibberella zeae (strain ATCC MYA-4620 / CBS 123657 / FGSC 9075 / NRRL 31084 / PH-1) (Wheat head blight fungus)).